A 117-amino-acid polypeptide reads, in one-letter code: Large ribosomal subunit protein uL18 (117 aa).

The protein belongs to the universal ribosomal protein uL18 family. Part of the 50S ribosomal subunit; part of the 5S rRNA/L5/L18/L25 subcomplex. Contacts the 5S and 23S rRNAs.

Functionally, this is one of the proteins that bind and probably mediate the attachment of the 5S RNA into the large ribosomal subunit, where it forms part of the central protuberance. This Buchnera aphidicola subsp. Acyrthosiphon kondoi (Acyrthosiphon kondoi symbiotic bacterium) protein is Large ribosomal subunit protein uL18.